The chain runs to 494 residues: Alanine--glyoxylate aminotransferase 2-like (494 aa).

K291 bears the N6-(pyridoxal phosphate)lysine mark.

The protein belongs to the class-III pyridoxal-phosphate-dependent aminotransferase family. The cofactor is pyridoxal 5'-phosphate.

This is Alanine--glyoxylate aminotransferase 2-like from Drosophila melanogaster (Fruit fly).